The primary structure comprises 341 residues: MQKILDTLYQGKNINQKQSEALLHSIIKEKLSAIQIASALISMKIRGETFEEIIGAVNILLTHAKPFPRPNSLFADITGTGGDNSNTINISTTSAIVAATCGAKIIKHGNRSISSLTGSMDLLKQHCLILNSPQQARKNFDELGICFLYAPQYYTVLHRIMPIRKQLKIPTLFNIVGPLINPSKPPLTLIGVYKKELLSPIIRILQLLKYNHAIVVHCGGIDEVGLHSPTHIAELHNSIINNYILTASDFGLDSYPIEILRCYSRKQAREYMINILKGRGKPAHSAVIAANVALLLKLFGYTDLRANAQLALEKIHYGIPYTLLSSLSETKIQNHATHNTR.

Residues glycine 79, 82 to 83 (GD), threonine 87, 89 to 92 (NIST), 107 to 115 (KHGNRSISS), and serine 119 each bind 5-phospho-alpha-D-ribose 1-diphosphate. Anthranilate is bound at residue glycine 79. Serine 91 contacts Mg(2+). Anthranilate is bound at residue asparagine 110. Position 164 (arginine 164) interacts with anthranilate. Aspartate 222 and glutamate 223 together coordinate Mg(2+).

This sequence belongs to the anthranilate phosphoribosyltransferase family. As to quaternary structure, homodimer. Requires Mg(2+) as cofactor.

It catalyses the reaction N-(5-phospho-beta-D-ribosyl)anthranilate + diphosphate = 5-phospho-alpha-D-ribose 1-diphosphate + anthranilate. It functions in the pathway amino-acid biosynthesis; L-tryptophan biosynthesis; L-tryptophan from chorismate: step 2/5. Catalyzes the transfer of the phosphoribosyl group of 5-phosphorylribose-1-pyrophosphate (PRPP) to anthranilate to yield N-(5'-phosphoribosyl)-anthranilate (PRA). The polypeptide is Anthranilate phosphoribosyltransferase (Blochmanniella pennsylvanica (strain BPEN)).